We begin with the raw amino-acid sequence, 314 residues long: Ferredoxin:CoB-CoM heterodisulfide reductase subunit B (314 aa).

This sequence belongs to the HdrB family. As to quaternary structure, the ferredoxin:CoB-CoM heterodisulfide reductase is composed of three subunits; HdrA1, HdrB1 and HdrC1. The cofactor is [4Fe-4S] cluster.

Its subcellular location is the cytoplasm. The catalysed reaction is coenzyme B + coenzyme M + 2 oxidized [2Fe-2S]-[ferredoxin] = coenzyme M-coenzyme B heterodisulfide + 2 reduced [2Fe-2S]-[ferredoxin] + 2 H(+). Its pathway is cofactor metabolism; coenzyme M-coenzyme B heterodisulfide reduction; coenzyme B and coenzyme M from coenzyme M-coenzyme B heterodisulfide: step 1/1. In terms of biological role, part of a complex that catalyzes the reversible reduction of CoM-S-S-CoB to the thiol-coenzymes H-S-CoM (coenzyme M) and H-S-CoB (coenzyme B). Probably involved in methylotrophic methanogenesis but not in aceticlastic methanogenesis. This Methanosarcina acetivorans (strain ATCC 35395 / DSM 2834 / JCM 12185 / C2A) protein is Ferredoxin:CoB-CoM heterodisulfide reductase subunit B.